We begin with the raw amino-acid sequence, 190 residues long: 6,7-dimethyl-8-ribityllumazine synthase (190 aa).

5-amino-6-(D-ribitylamino)uracil-binding positions include F23, 61 to 63, and 85 to 87; these read SFE and AVI. A (2S)-2-hydroxy-3-oxobutyl phosphate-binding site is contributed by 90 to 91; it reads QT. The Proton donor role is filled by H93. 5-amino-6-(D-ribitylamino)uracil is bound at residue F118. R132 is a (2S)-2-hydroxy-3-oxobutyl phosphate binding site.

Belongs to the DMRL synthase family.

The enzyme catalyses (2S)-2-hydroxy-3-oxobutyl phosphate + 5-amino-6-(D-ribitylamino)uracil = 6,7-dimethyl-8-(1-D-ribityl)lumazine + phosphate + 2 H2O + H(+). It participates in cofactor biosynthesis; riboflavin biosynthesis; riboflavin from 2-hydroxy-3-oxobutyl phosphate and 5-amino-6-(D-ribitylamino)uracil: step 1/2. Functionally, catalyzes the formation of 6,7-dimethyl-8-ribityllumazine by condensation of 5-amino-6-(D-ribitylamino)uracil with 3,4-dihydroxy-2-butanone 4-phosphate. This is the penultimate step in the biosynthesis of riboflavin. The sequence is that of 6,7-dimethyl-8-ribityllumazine synthase from Trichormus variabilis (strain ATCC 29413 / PCC 7937) (Anabaena variabilis).